We begin with the raw amino-acid sequence, 91 residues long: UPF0250 protein PFLU_5418 (91 aa).

It belongs to the UPF0250 family.

The chain is UPF0250 protein PFLU_5418 from Pseudomonas fluorescens (strain SBW25).